Here is a 350-residue protein sequence, read N- to C-terminus: MNEEQKKALTAVLTQLDKQFGKGTVMRLGEQVAAHDIQAISTGSLTLDIALGIGGLPKGRIVEIYGPESSGKTTMMLHVIAEAQKNGGTAAFIDAEHALDPIYARKLGVNTDDLYVTQPDTGEQALEICDALVRSGAFDVIVVDSVAALTPKAEIEGEMGDSHVGLQARLMSQALRKLTGNIKRANTLVVFINQIRMKIGVMFGSPETTTGGNALKFYASVRMDIRRIGSIKEGDEVLGNETRVKVVKNKVAPPFKQAEFDILYGQGVSREGEIIQLAVNADIMQKSGAWYSYRDEKIGQGKEKVRLYLKEHPDVAQEIETKIREKFIGGELHLPDAAGDEIDTSINDEE.

66–73 (GPESSGKT) contacts ATP.

Belongs to the RecA family.

The protein localises to the cytoplasm. In terms of biological role, can catalyze the hydrolysis of ATP in the presence of single-stranded DNA, the ATP-dependent uptake of single-stranded DNA by duplex DNA, and the ATP-dependent hybridization of homologous single-stranded DNAs. It interacts with LexA causing its activation and leading to its autocatalytic cleavage. The chain is Protein RecA from Dichelobacter nodosus (strain VCS1703A).